The chain runs to 171 residues: Ribosome maturation factor RimP (171 aa).

The protein belongs to the RimP family.

It localises to the cytoplasm. In terms of biological role, required for maturation of 30S ribosomal subunits. In Anaeromyxobacter dehalogenans (strain 2CP-1 / ATCC BAA-258), this protein is Ribosome maturation factor RimP.